Here is a 335-residue protein sequence, read N- to C-terminus: Pro-cathepsin H (335 aa).

Positions 1–22 are cleaved as a signal peptide; that stretch reads MWAVLPLLCAGAWLLGAPACGA. A propeptide spans 23-97 (activation peptide); it reads AELAANSLEK…DELKRKYLWS (75 aa). Residues asparagine 72 and asparagine 101 are each glycosylated (N-linked (GlcNAc...) asparagine). Intrachain disulfides connect cysteine 102-cysteine 327, cysteine 138-cysteine 181, cysteine 172-cysteine 214, and cysteine 272-cysteine 322. Residues 106 to 115 constitute a propeptide that is removed on maturation; sequence KSNYLRGTGP. Residue cysteine 141 is part of the active site. Residue asparagine 230 is glycosylated (N-linked (GlcNAc...) asparagine). Catalysis depends on residues histidine 281 and asparagine 301.

This sequence belongs to the peptidase C1 family. As to quaternary structure, composed of a mini chain and a large chain. The large chain may be split into heavy and light chain. All chains are held together by disulfide bonds.

Its subcellular location is the lysosome. The enzyme catalyses Hydrolysis of proteins, acting as an aminopeptidase (notably, cleaving Arg-|-Xaa bonds) as well as an endopeptidase.. In terms of biological role, important for the overall degradation of proteins in lysosomes. In Bos taurus (Bovine), this protein is Pro-cathepsin H (CTSH).